We begin with the raw amino-acid sequence, 93 residues long: UPF0390 protein C24B10.18 (93 aa).

The tract at residues 1–32 is disordered; sequence MAQGEFKKKKNSSANKGGRVTKHSKNPKKGAR. A compositionally biased stretch (basic residues) spans 19-31; that stretch reads RVTKHSKNPKKGA.

The protein belongs to the UPF0390 family.

The polypeptide is UPF0390 protein C24B10.18 (Schizosaccharomyces pombe (strain 972 / ATCC 24843) (Fission yeast)).